Reading from the N-terminus, the 468-residue chain is tRNA threonylcarbamoyladenosine dehydratase (468 aa).

Helical transmembrane passes span 15–35, 109–129, and 315–335; these read FWIA…TLEF, NSFV…NMLA, and ILPV…TYVL.

Belongs to the HesA/MoeB/ThiF family.

It is found in the mitochondrion outer membrane. Catalyzes the ATP-dependent dehydration of threonylcarbamoyladenosine at position 37 (t(6)A37) to form cyclic t(6)A37 (ct(6)A37) in tRNAs that read codons beginning with adenine. The sequence is that of tRNA threonylcarbamoyladenosine dehydratase (tcd1) from Schizosaccharomyces pombe (strain 972 / ATCC 24843) (Fission yeast).